A 135-amino-acid chain; its full sequence is uncharacterized protein (135 aa).

Helical transmembrane passes span 12–32, 68–88, and 98–118; these read IPIL…YNGI, SMIG…AKFC, and GILY…FYLF.

The protein localises to the cell membrane. This is an uncharacterized protein from Methanocaldococcus jannaschii (strain ATCC 43067 / DSM 2661 / JAL-1 / JCM 10045 / NBRC 100440) (Methanococcus jannaschii).